The chain runs to 129 residues: Small ribosomal subunit protein uS11 (129 aa).

It belongs to the universal ribosomal protein uS11 family. In terms of assembly, part of the 30S ribosomal subunit. Interacts with proteins S7 and S18. Binds to IF-3.

Located on the platform of the 30S subunit, it bridges several disparate RNA helices of the 16S rRNA. Forms part of the Shine-Dalgarno cleft in the 70S ribosome. This Geobacillus stearothermophilus (Bacillus stearothermophilus) protein is Small ribosomal subunit protein uS11.